The primary structure comprises 196 residues: Pyridoxal 5'-phosphate synthase subunit PdxT (196 aa).

52–54 is an L-glutamine binding site; sequence GES. C84 serves as the catalytic Nucleophile. Residues R113 and 141–142 contribute to the L-glutamine site; that span reads IR. Catalysis depends on charge relay system residues H178 and E180.

It belongs to the glutaminase PdxT/SNO family. In terms of assembly, in the presence of PdxS, forms a dodecamer of heterodimers. Only shows activity in the heterodimer.

It catalyses the reaction aldehydo-D-ribose 5-phosphate + D-glyceraldehyde 3-phosphate + L-glutamine = pyridoxal 5'-phosphate + L-glutamate + phosphate + 3 H2O + H(+). It carries out the reaction L-glutamine + H2O = L-glutamate + NH4(+). It functions in the pathway cofactor biosynthesis; pyridoxal 5'-phosphate biosynthesis. Functionally, catalyzes the hydrolysis of glutamine to glutamate and ammonia as part of the biosynthesis of pyridoxal 5'-phosphate. The resulting ammonia molecule is channeled to the active site of PdxS. This chain is Pyridoxal 5'-phosphate synthase subunit PdxT, found in Pyrococcus horikoshii (strain ATCC 700860 / DSM 12428 / JCM 9974 / NBRC 100139 / OT-3).